The following is a 91-amino-acid chain: Acylphosphatase (91 aa).

The 89-residue stretch at 3-91 (TVTMRVTGLV…EKFTRFSVVY (89 aa)) folds into the Acylphosphatase-like domain. Residues R18 and N36 contribute to the active site.

It belongs to the acylphosphatase family.

The enzyme catalyses an acyl phosphate + H2O = a carboxylate + phosphate + H(+). This is Acylphosphatase (acyP) from Lactobacillus johnsonii (strain CNCM I-12250 / La1 / NCC 533).